The primary structure comprises 193 residues: Ion-translocating oxidoreductase complex subunit A (193 aa).

The next 6 helical transmembrane spans lie at Leu4 to Gly24, Leu39 to Leu59, Leu72 to Val92, Ser102 to Leu122, Leu134 to Leu154, and Pro171 to Val191.

The protein belongs to the NqrDE/RnfAE family. As to quaternary structure, the complex is composed of six subunits: RnfA, RnfB, RnfC, RnfD, RnfE and RnfG.

The protein localises to the cell inner membrane. Its function is as follows. Part of a membrane-bound complex that couples electron transfer with translocation of ions across the membrane. The protein is Ion-translocating oxidoreductase complex subunit A of Syntrophotalea carbinolica (strain DSM 2380 / NBRC 103641 / GraBd1) (Pelobacter carbinolicus).